A 341-amino-acid polypeptide reads, in one-letter code: Paired box protein Pax-9 (341 aa).

The segment at residues alanine 4–lysine 130 is a DNA-binding region (paired). The tract at residues glutamate 7–threonine 63 is PAI subdomain. Residues threonine 82–lysine 130 form an RED subdomain region. The interval alanine 168 to proline 189 is interaction with KDM5B.

Interacts with KDM5B.

The protein resides in the nucleus. Transcription factor required for normal development of thymus, parathyroid glands, ultimobranchial bodies, teeth, skeletal elements of skull and larynx as well as distal limbs. This Callimico goeldii (Goeldi's marmoset) protein is Paired box protein Pax-9 (PAX9).